A 521-amino-acid polypeptide reads, in one-letter code: Probable glycogen synthase (521 aa).

This sequence belongs to the glycosyltransferase 1 family. Bacterial/plant glycogen synthase subfamily.

It catalyses the reaction [(1-&gt;4)-alpha-D-glucosyl](n) + ADP-alpha-D-glucose = [(1-&gt;4)-alpha-D-glucosyl](n+1) + ADP + H(+). It participates in glycan biosynthesis; glycogen biosynthesis. Synthesizes alpha-1,4-glucan chains using ADP-glucose. This is Probable glycogen synthase (glgA) from Methanocaldococcus jannaschii (strain ATCC 43067 / DSM 2661 / JAL-1 / JCM 10045 / NBRC 100440) (Methanococcus jannaschii).